Here is a 123-residue protein sequence, read N- to C-terminus: Small ribosomal subunit protein uS13c (123 aa).

The segment at 89 to 123 (RGKRHRNNLPVRGQRTRTNARSRRGSKKTVTGKKK) is disordered. Residues 102-123 (QRTRTNARSRRGSKKTVTGKKK) are compositionally biased toward basic residues.

This sequence belongs to the universal ribosomal protein uS13 family. As to quaternary structure, part of the 30S ribosomal subunit.

It localises to the plastid. Its subcellular location is the chloroplast. Its function is as follows. Located at the top of the head of the 30S subunit, it contacts several helices of the 16S rRNA. This is Small ribosomal subunit protein uS13c from Phaeodactylum tricornutum (strain CCAP 1055/1).